The sequence spans 473 residues: RUN domain-containing protein 3B (473 aa).

The disordered stretch occupies residues 1-24; the sequence is MASRSLGGLSGIRGGGGGGGKKSL. Gly residues predominate over residues 8–21; it reads GLSGIRGGGGGGGK. Residue arginine 13 is modified to Omega-N-methylarginine. Residues 57–206 form the RUN domain; the sequence is DDSSPEFNNF…IDFSFCLKGE (150 aa). A phosphoserine mark is found at serine 232 and serine 233. A coiled-coil region spans residues 317–342; it reads AHKLEKEQLEYIIVELQDQLTVLKNN. The span at 399–422 shows a compositional bias: polar residues; the sequence is SLSQTSLDPGQSQEGDGKQDTLNV. The segment at 399–428 is disordered; that stretch reads SLSQTSLDPGQSQEGDGKQDTLNVMSEGKE.

It belongs to the RUNDC3 family. Interacts with RAP2A. Isoform 2 is expressed at high levels in brain, thymus, ovary, testis, leukocyte, liver, small intestine and prostate. Isoform 1 is expressed in the brain, testis and adrenal gland. It is activated in tumorigenic breast cancer cell lines and in the primary tumor of breast cancer patients. Activation also correlates with metastatic lymph node invasion and can be detected in metastatic epithelial cells from the lymph nodes and in the bone marrow of patients.

In Homo sapiens (Human), this protein is RUN domain-containing protein 3B (RUNDC3B).